Here is a 491-residue protein sequence, read N- to C-terminus: MDPSVLLLLAVLLSLFLLLVRGHAKIHGHLPPGPHPLPLLGNLLQMDRGGLLKCFIQLQEKHGDVFTVHLGPRPVVVLCGTQTIREALVDHAEAFSGRGTIAAAQLVMQDYGIFFASGQRWKTLRRFSLATMKEFGMGKRSVEERIKEEAQCLVEELKKYQGVPLDPTFLFQCITANIICSIVFGERFDYTDDQFLHLLNLMYKIFSLLSSFSGQMFELFSGFLKYFPGVHRQIVKKQQELLDYIAHSVEKHKATLDPSAPRDYIDTYLLRMEKEKSNHNTEFHHQNLMMSVLSLFFAGTETTSATLHYGVLLMLKYPHVTEKVQKEIDQVIGSHRLPTLDDRTKMPYTDAVIHEIQRFSDLVPIGLPHKVIKDTLFRGYLLPKNTEVYPVLSSALHDPQYFEQPDKFNPEHFLDANGALKKCEAFLPFSTGKRICLGESIARNELFIFFTTILQNFSVASPVAPKDIDLTPKESGIGKIPPAHQIYFLAR.

Ser128 carries the phosphoserine; by PKA modification. Cys436 contributes to the heme binding site.

Belongs to the cytochrome P450 family. Heme is required as a cofactor.

The protein resides in the endoplasmic reticulum membrane. It localises to the microsome membrane. It carries out the reaction an organic molecule + reduced [NADPH--hemoprotein reductase] + O2 = an alcohol + oxidized [NADPH--hemoprotein reductase] + H2O + H(+). Its function is as follows. Cytochromes P450 are a group of heme-thiolate monooxygenases. In liver microsomes, this enzyme is involved in an NADPH-dependent electron transport pathway. It oxidizes a variety of structurally unrelated compounds, including steroids, fatty acids, and xenobiotics. This is Cytochrome P450 2B9 (Cyp2b9) from Mus musculus (Mouse).